Reading from the N-terminus, the 128-residue chain is UPF0102 protein BCG_2919c (128 aa).

This sequence belongs to the UPF0102 family.

The chain is UPF0102 protein BCG_2919c from Mycobacterium bovis (strain BCG / Pasteur 1173P2).